The sequence spans 152 residues: Superoxide dismutase [Cu-Zn] (152 aa).

Residues H45, H47, and H62 each contribute to the Cu cation site. C56 and C145 are disulfide-bonded. Residues H62, H70, H79, and D82 each coordinate Zn(2+). H119 is a Cu cation binding site.

The protein belongs to the Cu-Zn superoxide dismutase family. Homodimer. The cofactor is Cu cation. Zn(2+) is required as a cofactor.

The protein localises to the cytoplasm. The enzyme catalyses 2 superoxide + 2 H(+) = H2O2 + O2. Functionally, destroys radicals which are normally produced within the cells and which are toxic to biological systems. This is Superoxide dismutase [Cu-Zn] (SODCC) from Brassica oleracea var. capitata (Cabbage).